The primary structure comprises 213 residues: A-type ATP synthase subunit D (213 aa).

Belongs to the V-ATPase D subunit family. Has multiple subunits with at least A(3), B(3), C, D, E, F, H, I and proteolipid K(x).

It localises to the cell membrane. Component of the A-type ATP synthase that produces ATP from ADP in the presence of a proton gradient across the membrane. This Thermoplasma acidophilum (strain ATCC 25905 / DSM 1728 / JCM 9062 / NBRC 15155 / AMRC-C165) protein is A-type ATP synthase subunit D.